The chain runs to 69 residues: uncharacterized protein (69 aa).

One can recognise an HTH cro/C1-type domain in the interval 10–64 (IRAFRKLKGYTQEGFAKALGISVSILGEIERGNRLPSAAIIQDAADVLNISADEL). The segment at residues 21 to 40 (QEGFAKALGISVSILGEIER) is a DNA-binding region (H-T-H motif).

This is an uncharacterized protein from Bacillus subtilis (strain 168).